The primary structure comprises 423 residues: AP-1 complex subunit mu-2 (423 aa).

The MHD domain maps to 168-421; that stretch reads KNEVFIDVIE…ITQSGDYQLR (254 aa).

This sequence belongs to the adaptor complexes medium subunit family. Adaptor protein complex 1 (AP-1) is a heterotetramer composed of two large adaptins (gamma-type subunit AP1G1 and beta-type subunit AP1B1), a medium adaptin (mu-type subunit AP1M1 or AP1M2) and a small adaptin (sigma-type subunit AP1S1 or AP1S2 or AP1S3). Interacts with P2X4. In terms of processing, phosphorylation of membrane-bound AP1M1/AP1M2 increases its affinity for sorting signals.

The protein localises to the golgi apparatus. It localises to the cytoplasmic vesicle. Its subcellular location is the clathrin-coated vesicle membrane. Functionally, subunit of clathrin-associated adaptor protein complex 1 that plays a role in protein sorting in the trans-Golgi network (TGN) and endosomes. The AP complexes mediate the recruitment of clathrin to membranes and the recognition of sorting signals within the cytosolic tails of transmembrane cargo molecules. This chain is AP-1 complex subunit mu-2 (Ap1m2), found in Rattus norvegicus (Rat).